The chain runs to 545 residues: High-affinity glucose transporter 1 (545 aa).

A run of 9 helical transmembrane segments spans residues 29–49, 72–92, 100–120, 125–145, 157–177, 192–212, 291–311, 317–337, and 345–365; these read VFFIASISTIAGMMFGFDISS, GFITSSMALGSFFGSIASSFV, LSLLTCAFFWMVGAAIQSSVQ, LIIGRIISGIGVGFGSAVAPV, GLIGGMFQFFVTLGIMIMFYL, IAWGLQIVPGLCLFLGCFFIP, LTGMNVMMYYIVYIFQMAGYS, VASSIQYVINTCVTVPALYFI, and LLIGGATMMMAFQFGLAGILG. N-linked (GlcNAc...) asparagine glycosylation is found at asparagine 376 and asparagine 387. Helical transmembrane passes span 395-415 and 433-453; these read IACCYLFVASFAFTWGVGIWV and ISTSANWILNFAIAMYTPTGF. N-linked (GlcNAc...) asparagine glycosylation occurs at asparagine 455. A helical transmembrane segment spans residues 460 to 480; sequence TYIIYGVFCFAMATHVYFGFP. Positions 524-545 are disordered; the sequence is VEHEEDKLMNEDSNSESRENQA.

Belongs to the major facilitator superfamily. Sugar transporter (TC 2.A.1.1) family. In terms of assembly, interacts with the human complement factors FH and C4BP. Also binds human immunodeficiency virus (HIV) protein gp160.

The protein resides in the cell membrane. Its function is as follows. High-affinity glucose transporter. Acts as a multifunctional complement-evasion molecule that causes down-regulation of complement activation by acquisition of human complement factors FH and C4BP. Also functions as a human immunodeficiency virus (HIV) receptor via binding the viral gp160 protein. Modulates hyphae formation. The chain is High-affinity glucose transporter 1 from Candida albicans (strain SC5314 / ATCC MYA-2876) (Yeast).